Here is a 756-residue protein sequence, read N- to C-terminus: Disintegrin and metalloproteinase domain-containing protein 5 (756 aa).

An N-terminal signal peptide occupies residues 1 to 16 (MFLLLVLLTGLGGMHA). Positions 17–142 (DLNPHKTFLQ…AVSGFIHKIY (126 aa)) are excised as a propeptide. Topologically, residues 17–698 (DLNPHKTFLQ…GRHAPFQKQR (682 aa)) are extracellular. Residues 183 to 380 (RYIEMHIVVD…NGLTCLQTNP (198 aa)) form the Peptidase M12B domain. 4 cysteine pairs are disulfide-bonded: Cys292/Cys375, Cys334/Cys359, Cys336/Cys341, and Cys449/Cys470. The Disintegrin domain occupies 389 to 478 (RRICGNGLLE…YCLLDTYVRD (90 aa)). Asn559 carries an N-linked (GlcNAc...) asparagine glycan. The EGF-like domain occupies 630–664 (DFETCEASIECSGHGICNNFNHCHCEKGYNPPHCK). 3 disulfide bridges follow: Cys634–Cys646, Cys640–Cys652, and Cys654–Cys663. A helical membrane pass occupies residues 699–719 (FQLIFYISLPVLIITTAILIK). Residues 720 to 756 (RKKLRELCYRGETESESSVSQESSSNSKSSLSESTSL) lie on the Cytoplasmic side of the membrane. The segment at 731 to 756 (ETESESSVSQESSSNSKSSLSESTSL) is disordered. Positions 735–756 (ESSVSQESSSNSKSSLSESTSL) are enriched in low complexity.

In terms of assembly, interacts with TEX101. Post-translationally, subject to proteolytic processing during epididymal transit of spermatozoa. Detected in testis (at protein level). Detected in adult and prepubertal testis. Detected at very low levels in heart, kidney, brain, muscle ovary and uterus.

It is found in the membrane. This is a non catalytic metalloprotease-like protein. May play a role in sperm-egg fusion. The protein is Disintegrin and metalloproteinase domain-containing protein 5 (ADAM5) of Macaca fascicularis (Crab-eating macaque).